Here is a 439-residue protein sequence, read N- to C-terminus: MNAPPQKRVYPKLPVWIVEDHHEVVQHIYRAIGSRHIPMKGIKMVHLDSHPDLLIPVNMPADTVYDKETLLRELSIENWIMPMVYAGHVSHVAWLHPYWAQQIREGQHCMCVGKDSSTTTIRVTSKDDYFLSDALYVPLDHLEHPKELHLHVIRVDPVVSSQTTKLENGQSGAKIPKAAQTQDDMQSKADTPCTSSSQPPDGSAASGNISETAKKKADDGSTSYITDKLLAVIEQTDPFILDIDLDFFSCKNPFKDMFSQEEFTLLKELYSFSKPQQDPDEEELLECVERRTRQLEDLEAAFADLLEDDGQETVERLAANPGMKSLFRLVHSLKNRPSPPDYEMVHQAGLTCDNSELPHHISSDEEIQQMITAVQLFLETLPKPTIVTISRSSLDEYCPAEQVDSIQIRVLDILESLFGCLDVHRDYESIPAESTSHTA.

Positions 163 to 219 (TTKLENGQSGAKIPKAAQTQDDMQSKADTPCTSSSQPPDGSAASGNISETAKKKADD) are disordered. Over residues 179–211 (AQTQDDMQSKADTPCTSSSQPPDGSAASGNISE) the composition is skewed to polar residues.

It belongs to the UPF0489 family.

This Danio rerio (Zebrafish) protein is UPF0489 protein C5orf22 homolog.